A 598-amino-acid chain; its full sequence is Elongation factor 4 (598 aa).

Residues 3–185 (QHIRNFSIIA…MIVARIPPPE (183 aa)) form the tr-type G domain. Residues 15–20 (DHGKST) and 132–135 (NKID) each bind GTP.

It belongs to the TRAFAC class translation factor GTPase superfamily. Classic translation factor GTPase family. LepA subfamily.

The protein resides in the cell inner membrane. The enzyme catalyses GTP + H2O = GDP + phosphate + H(+). Required for accurate and efficient protein synthesis under certain stress conditions. May act as a fidelity factor of the translation reaction, by catalyzing a one-codon backward translocation of tRNAs on improperly translocated ribosomes. Back-translocation proceeds from a post-translocation (POST) complex to a pre-translocation (PRE) complex, thus giving elongation factor G a second chance to translocate the tRNAs correctly. Binds to ribosomes in a GTP-dependent manner. The chain is Elongation factor 4 from Nitrosomonas eutropha (strain DSM 101675 / C91 / Nm57).